The sequence spans 275 residues: Cytochrome c oxidase subunit 3 (275 aa).

7 consecutive transmembrane segments (helical) span residues 22 to 42 (PWPL…VMYF), 52 to 72 (SGAL…ALWF), 96 to 116 (GVAL…WAFF), 132 to 152 (PVGI…ILLL), 173 to 193 (AILG…CQGI), 211 to 231 (FFFS…FIAV), and 253 to 273 (ILYW…VYWW).

It belongs to the cytochrome c oxidase subunit 3 family. In terms of assembly, component of the cytochrome c oxidase (complex IV, CIV), a multisubunit enzyme composed of a catalytic core of 3 subunits and several supernumerary subunits. The complex exists as a monomer or a dimer and forms supercomplexes (SCs) in the inner mitochondrial membrane with ubiquinol-cytochrome c oxidoreductase (cytochrome b-c1 complex, complex III, CIII).

The protein localises to the mitochondrion inner membrane. The catalysed reaction is 4 Fe(II)-[cytochrome c] + O2 + 8 H(+)(in) = 4 Fe(III)-[cytochrome c] + 2 H2O + 4 H(+)(out). Its function is as follows. Component of the cytochrome c oxidase, the last enzyme in the mitochondrial electron transport chain which drives oxidative phosphorylation. The respiratory chain contains 3 multisubunit complexes succinate dehydrogenase (complex II, CII), ubiquinol-cytochrome c oxidoreductase (cytochrome b-c1 complex, complex III, CIII) and cytochrome c oxidase (complex IV, CIV), that cooperate to transfer electrons derived from NADH and succinate to molecular oxygen, creating an electrochemical gradient over the inner membrane that drives transmembrane transport and the ATP synthase. Cytochrome c oxidase is the component of the respiratory chain that catalyzes the reduction of oxygen to water. Electrons originating from reduced cytochrome c in the intermembrane space (IMS) are transferred via the dinuclear copper A center (CU(A)) of subunit 2 and heme A of subunit 1 to the active site in subunit 1, a binuclear center (BNC) formed by heme A3 and copper B (CU(B)). The BNC reduces molecular oxygen to 2 water molecules using 4 electrons from cytochrome c in the IMS and 4 protons from the mitochondrial matrix. The chain is Cytochrome c oxidase subunit 3 (COX3) from Mycosarcoma maydis (Corn smut fungus).